Consider the following 239-residue polypeptide: Tumor necrosis factor ligand superfamily member 14 (239 aa).

Residues 1–37 (MESVVQPSVFVVDGQTDIPFRRLEQNHRRRRCGTVQV) lie on the Cytoplasmic side of the membrane. Residues 38-58 (SLALVLLLGAGLATQGWFLLR) traverse the membrane as a helical; Signal-anchor for type II membrane protein segment. The Extracellular segment spans residues 59 to 239 (LHQRLGDIVA…TRSYFGAFMV (181 aa)). The THD domain occupies 92–239 (PAAHLTGANA…TRSYFGAFMV (148 aa)). Residue Asn100 is glycosylated (N-linked (GlcNAc...) asparagine). Cys152 and Cys187 are joined by a disulfide. N-linked (GlcNAc...) asparagine glycosylation occurs at Asn191.

Belongs to the tumor necrosis factor family. Homotrimer. Interacts with TNFRSF14. The soluble form derives from the membrane form by proteolytic processing.

It is found in the cell membrane. It localises to the secreted. Functionally, cytokine that binds to TNFRSF3/LTBR. Binding to the decoy receptor TNFRSF6B modulates its effects. Activates NFKB and stimulates the proliferation of T-cells. Acts as a ligand for TNFRSF14/HVEM. Upon binding to TNFRSF14/HVEM, delivers costimulatory signals to T cells, leading to T cell proliferation and IFNG production. The chain is Tumor necrosis factor ligand superfamily member 14 (Tnfsf14) from Mus musculus (Mouse).